A 134-amino-acid chain; its full sequence is Protein NrdI (134 aa).

It belongs to the NrdI family.

In terms of biological role, probably involved in ribonucleotide reductase function. This Yersinia enterocolitica serotype O:8 / biotype 1B (strain NCTC 13174 / 8081) protein is Protein NrdI.